A 242-amino-acid polypeptide reads, in one-letter code: Segregation and condensation protein A (242 aa).

It belongs to the ScpA family. In terms of assembly, component of a cohesin-like complex composed of ScpA, ScpB and the Smc homodimer, in which ScpA and ScpB bind to the head domain of Smc. The presence of the three proteins is required for the association of the complex with DNA.

Its subcellular location is the cytoplasm. Its function is as follows. Participates in chromosomal partition during cell division. May act via the formation of a condensin-like complex containing Smc and ScpB that pull DNA away from mid-cell into both cell halves. The chain is Segregation and condensation protein A from Streptococcus pneumoniae (strain Taiwan19F-14).